We begin with the raw amino-acid sequence, 436 residues long: Trigger factor (436 aa).

The PPIase FKBP-type domain occupies G164–P249.

It belongs to the FKBP-type PPIase family. Tig subfamily.

Its subcellular location is the cytoplasm. The catalysed reaction is [protein]-peptidylproline (omega=180) = [protein]-peptidylproline (omega=0). Functionally, involved in protein export. Acts as a chaperone by maintaining the newly synthesized protein in an open conformation. Functions as a peptidyl-prolyl cis-trans isomerase. In Limosilactobacillus reuteri (strain DSM 20016) (Lactobacillus reuteri), this protein is Trigger factor.